The chain runs to 447 residues: CBL-interacting serine/threonine-protein kinase 9 (447 aa).

Residues 19–274 (YEMGRTLGEG…IAELLEDEWF (256 aa)) enclose the Protein kinase domain. ATP is bound by residues 25 to 33 (LGEGSFAKV) and K48. D142 serves as the catalytic Proton acceptor. The interval 160 to 189 (DFGLSAFSRQVREDGLLHTACGTPNYVAPE) is activation loop. S164 bears the Phosphoserine mark. T178 is subject to Phosphothreonine. Residues 312–336 (EKPVSMNAFELISSSSEFSLENLFE) enclose the NAF domain. The segment at 343-372 (KKETRFTSQRSASEIMSKMEETAKPLGFNV) is PPI.

Belongs to the protein kinase superfamily. CAMK Ser/Thr protein kinase family. SNF1 subfamily. Interacts with CBL2 and CBL3. Requires Mn(2+) as cofactor. As to expression, expressed at low levels in roots and shoots. Detected in root vascular bundles and in the leaf vascular tissue and hydathode, but not in root tips.

It localises to the cytoplasm. Its subcellular location is the nucleus. The catalysed reaction is L-seryl-[protein] + ATP = O-phospho-L-seryl-[protein] + ADP + H(+). The enzyme catalyses L-threonyl-[protein] + ATP = O-phospho-L-threonyl-[protein] + ADP + H(+). In terms of biological role, CIPK serine-threonine protein kinases interact with CBL proteins. Binding of a CBL protein to the regulatory NAF domain of CIPK protein lead to the activation of the kinase in a calcium-dependent manner. Involved in K(+) homeostasis under low-K(+) stress. This Arabidopsis thaliana (Mouse-ear cress) protein is CBL-interacting serine/threonine-protein kinase 9 (CIPK9).